We begin with the raw amino-acid sequence, 357 residues long: Histidinol-phosphate aminotransferase (357 aa).

Position 222 is an N6-(pyridoxal phosphate)lysine (lysine 222).

Belongs to the class-II pyridoxal-phosphate-dependent aminotransferase family. Histidinol-phosphate aminotransferase subfamily. As to quaternary structure, homodimer. It depends on pyridoxal 5'-phosphate as a cofactor.

It catalyses the reaction L-histidinol phosphate + 2-oxoglutarate = 3-(imidazol-4-yl)-2-oxopropyl phosphate + L-glutamate. Its pathway is amino-acid biosynthesis; L-histidine biosynthesis; L-histidine from 5-phospho-alpha-D-ribose 1-diphosphate: step 7/9. This Leuconostoc mesenteroides subsp. mesenteroides (strain ATCC 8293 / DSM 20343 / BCRC 11652 / CCM 1803 / JCM 6124 / NCDO 523 / NBRC 100496 / NCIMB 8023 / NCTC 12954 / NRRL B-1118 / 37Y) protein is Histidinol-phosphate aminotransferase.